A 1142-amino-acid polypeptide reads, in one-letter code: Ribonucleoside-diphosphate reductase large subunit (1142 aa).

Positions M1–D33 are disordered. Residues P16–E26 show a composition bias toward basic and acidic residues. The RIP homotypic interaction motif (RHIM) signature appears at A55–D75. The interval S118–E322 is disordered. The segment covering G119–G132 has biased composition (polar residues). Residues T141–P159 are compositionally biased toward pro residues. Residues C164–G179 show a composition bias toward basic and acidic residues. Residues S192–G205 are compositionally biased toward acidic residues. Residues G277–P303 are compositionally biased toward low complexity. The alpha-crystallin domain stretch occupies residues A294–N400. Substrate is bound by residues T571, S586 to C587, G617, N796 to E800, and P973 to S977. Cysteines 587 and 813 form a disulfide. Catalysis depends on N796, which acts as the Proton acceptor. C798 (cysteine radical intermediate) is an active-site residue. E800 serves as the catalytic Proton acceptor.

Belongs to the ribonucleoside diphosphate reductase large chain family. Heterotetramer composed of a homodimer of the large subunit (R1) and a homodimer of the small subunit (R2). Larger multisubunit protein complex are also active, composed of (R1)n(R2)n. May self-assemble (via RIP homotypic interaction motif/RHIM) into homomeric fibrillar amyloid structures. Interacts (via RHIM) with human RIPK1 (via RHIM). Interacts (via RHIM) with human RIPK3 (via RHIM). May interact (via RHIM) with human ZBP1 (via RHIM). Interacts (via C-terminus) with host CASP8.

The protein resides in the host cell membrane. Its subcellular location is the host endosome membrane. The enzyme catalyses a 2'-deoxyribonucleoside 5'-diphosphate + [thioredoxin]-disulfide + H2O = a ribonucleoside 5'-diphosphate + [thioredoxin]-dithiol. In terms of biological role, ribonucleoside-diphosphate reductase holoenzyme that provides the precursors necessary for viral DNA synthesis. Allows virus growth in non-dividing cells, as well as reactivation from latency in infected hosts. Catalyzes the biosynthesis of deoxyribonucleotides from the corresponding ribonucleotides. The N-terminal region confers antiapoptotic activity in differentiated cells such as neurons and is important for viral reactivation to increase neural survivability. Prevents host necroptosis by targeting host RIPK1 and RIPK3, thereby hampering the formation of necroptotic RIPK1-RIPK3 complexes. May form hetero-amyloid structures with host proteins RIPK3 or ZBP1, thereby preventing RIPK3- and ZBP1-mediated necroptosis. In addition, inhibits extrinsic apoptosis by targeting host CASP8. This chain is Ribonucleoside-diphosphate reductase large subunit, found in Homo sapiens (Human).